We begin with the raw amino-acid sequence, 531 residues long: Protein SIS2 (531 aa).

Positions 1-20 (MPSDKDIKSPAQPKKEEEIP) are enriched in basic and acidic residues. 5 disordered regions span residues 1 to 42 (MPSD…ANII), 88 to 127 (SPDS…KSPS), 139 to 168 (RPVR…EPSS), 180 to 261 (SLRA…DPRL), and 461 to 531 (YPED…TTNL). A compositionally biased stretch (polar residues) spans 155–168 (LTPITSPQHSEPSS). Over residues 183-198 (ATTNSISSAAASNQST) the composition is skewed to low complexity. Over residues 204–213 (SGGGGGGGGA) the composition is skewed to gly residues. A compositionally biased stretch (low complexity) spans 214–249 (NTATSSNSTTSNTALAAQGTTTTTTTTNSNSNTTTT). Acidic residues-rich tracts occupy residues 462 to 472 (PEDEDEDEADD) and 481 to 514 (AIID…EEDP).

It belongs to the HFCD (homooligomeric flavin containing Cys decarboxylase) superfamily.

Its subcellular location is the nucleus. It is found in the cytoplasm. Functionally, may stimulate expression of certain genes that are periodically expressed during late G1. Also modulates the expression of the ENA1 ATPase. The protein is Protein SIS2 (SIS2) of Candida tropicalis (Yeast).